Consider the following 287-residue polypeptide: Pyridoxal kinase PdxY (287 aa).

Residues S10 and 45 to 46 (TQ) contribute to the substrate site. Residues D112, A144, E149, K182, and 209–212 (RPLV) contribute to the ATP site. Position 224 (D224) interacts with substrate.

Belongs to the pyridoxine kinase family. PdxY subfamily. Homodimer. The cofactor is Mg(2+).

It catalyses the reaction pyridoxal + ATP = pyridoxal 5'-phosphate + ADP + H(+). The protein operates within cofactor metabolism; pyridoxal 5'-phosphate salvage; pyridoxal 5'-phosphate from pyridoxal: step 1/1. Functionally, pyridoxal kinase involved in the salvage pathway of pyridoxal 5'-phosphate (PLP). Catalyzes the phosphorylation of pyridoxal to PLP. This Shigella boydii serotype 4 (strain Sb227) protein is Pyridoxal kinase PdxY.